Here is a 163-residue protein sequence, read N- to C-terminus: Putative 4-hydroxy-4-methyl-2-oxoglutarate aldolase (163 aa).

Substrate is bound by residues 76-79 (GDMI) and R98. Position 99 (D99) interacts with a divalent metal cation.

It belongs to the class II aldolase/RraA-like family. In terms of assembly, homotrimer. It depends on a divalent metal cation as a cofactor.

The catalysed reaction is 4-hydroxy-4-methyl-2-oxoglutarate = 2 pyruvate. It carries out the reaction oxaloacetate + H(+) = pyruvate + CO2. Functionally, catalyzes the aldol cleavage of 4-hydroxy-4-methyl-2-oxoglutarate (HMG) into 2 molecules of pyruvate. Also contains a secondary oxaloacetate (OAA) decarboxylase activity due to the common pyruvate enolate transition state formed following C-C bond cleavage in the retro-aldol and decarboxylation reactions. The chain is Putative 4-hydroxy-4-methyl-2-oxoglutarate aldolase from Pseudomonas fluorescens (strain Pf0-1).